The chain runs to 455 residues: MSLDIVILAAGQGTRMRSALPKVLHPVAGNSMLGHVIHSARQLSPVGIHVVIGHGADAVREQLAADDLNFVMQDKQLGTGHAVAQALPALTAETVLILYGDVPLIEVETLQRLLKRVTPEQLGLLTVKLDDPTGYGRIVRDDQHRVCAIVEHKDATDAQKAITEGNTGILAVPASHLQDWLGRLSNNNAQGEYYLTDVIAMAVNDGLVVATEQPHDAMEVQGANDRKQLSELERHYQLREARRLMAAGVTLRDPSRFDVRGEVSVGRDVLIDINVILEGKVIIEDDVVIGPNCVIKDSTLRKGVVVKANSHIDGALLGECSDAGPFARLRPGSVLGAKAHVGNFVELKNANLGEGAKVGHLTYLGDAEVGARTNIGAGTITCNYDGANKHKTTLGADVFIGSNNSLVAPVDILDGATTAAGSTITQNVPAEQLGVARARQRNIEGWKRPVKITKD.

Residues 1–226 (MSLDIVILAA…AMEVQGANDR (226 aa)) are pyrophosphorylase. Residues 8–11 (LAAG), lysine 22, glutamine 73, 78–79 (GT), 99–101 (YGD), glycine 136, glutamate 151, asparagine 166, and asparagine 224 contribute to the UDP-N-acetyl-alpha-D-glucosamine site. A Mg(2+)-binding site is contributed by aspartate 101. Asparagine 224 contributes to the Mg(2+) binding site. The tract at residues 227–247 (KQLSELERHYQLREARRLMAA) is linker. The tract at residues 248–455 (GVTLRDPSRF…WKRPVKITKD (208 aa)) is N-acetyltransferase. The UDP-N-acetyl-alpha-D-glucosamine site is built by arginine 330 and lysine 348. Residue histidine 360 is the Proton acceptor of the active site. Residues tyrosine 363 and asparagine 374 each contribute to the UDP-N-acetyl-alpha-D-glucosamine site. Acetyl-CoA contacts are provided by residues alanine 377, 383–384 (NY), serine 402, alanine 420, and arginine 437.

In the N-terminal section; belongs to the N-acetylglucosamine-1-phosphate uridyltransferase family. It in the C-terminal section; belongs to the transferase hexapeptide repeat family. In terms of assembly, homotrimer. The cofactor is Mg(2+).

The protein resides in the cytoplasm. The catalysed reaction is alpha-D-glucosamine 1-phosphate + acetyl-CoA = N-acetyl-alpha-D-glucosamine 1-phosphate + CoA + H(+). The enzyme catalyses N-acetyl-alpha-D-glucosamine 1-phosphate + UTP + H(+) = UDP-N-acetyl-alpha-D-glucosamine + diphosphate. Its pathway is nucleotide-sugar biosynthesis; UDP-N-acetyl-alpha-D-glucosamine biosynthesis; N-acetyl-alpha-D-glucosamine 1-phosphate from alpha-D-glucosamine 6-phosphate (route II): step 2/2. It participates in nucleotide-sugar biosynthesis; UDP-N-acetyl-alpha-D-glucosamine biosynthesis; UDP-N-acetyl-alpha-D-glucosamine from N-acetyl-alpha-D-glucosamine 1-phosphate: step 1/1. It functions in the pathway bacterial outer membrane biogenesis; LPS lipid A biosynthesis. Catalyzes the last two sequential reactions in the de novo biosynthetic pathway for UDP-N-acetylglucosamine (UDP-GlcNAc). The C-terminal domain catalyzes the transfer of acetyl group from acetyl coenzyme A to glucosamine-1-phosphate (GlcN-1-P) to produce N-acetylglucosamine-1-phosphate (GlcNAc-1-P), which is converted into UDP-GlcNAc by the transfer of uridine 5-monophosphate (from uridine 5-triphosphate), a reaction catalyzed by the N-terminal domain. This Pseudomonas syringae pv. tomato (strain ATCC BAA-871 / DC3000) protein is Bifunctional protein GlmU.